We begin with the raw amino-acid sequence, 667 residues long: MSSSSFVWTVGSIALSSLITPTIADGSGSRYQLTEAWQGEKFLDHFKFFSGSDPTNGFVTYANQSYAESSGLIEVTESGSFYMGVDYKTKLSPNGPGRDSVRIESKEYYDEGLYIIDLQHMPGSVCGTWPAFWSVGPNWPYDGEIDIIEGVNKHEANEIVLHTSGSCSLSSENDMSGTMSSSECGESSGTIGCVVKGQTGTSGAPFNEKNGGVYAMEWTSSFVKIWYFARSEIPQSITEGNPDTTAFGTPMAHLQGTCDFGERFKSQKFILDTTFCGDWAGGVFGDSGCPVSDPSNPIQSCVNYVAENPAAFKEAYWEINYIKLFQTGTGHSTASIASQAETATAVVSKTVDSVPSVTSTPILETTAPAPETVSAEAPATSSAVPEPANPQTSVAGAETTAAPAPSPETTAAPASPSSDDSEGADAVSETTIYVTETTTICGASTQKGTIQTIGGGETEVSPASSTVESAATPAAPTPTSQEPVASLPGTTVNDGTPVPTDVSPETPAEETAGESGAPTPSAEQPEKPQPAATSIETGIVPPPVSNPAPTEQGTPEGASPVDATESRHVPDEPAPTSAAPIRSPSPSSWTISSSSRVALSSSFASTTSSASRTTSATKEATAPTETDSGASTGTNPESPVFTAGASKSVGISGLAGIVCGIAMAMLA.

A signal peptide spans 1–24 (MSSSSFVWTVGSIALSSLITPTIA). Residues 25–288 (DGSGSRYQLT…WAGGVFGDSG (264 aa)) enclose the GH16 domain. N-linked (GlcNAc...) asparagine glycosylation is present at Asn-63. The active-site Nucleophile is the Glu-144. Glu-149 (proton donor) is an active-site residue. 2 stretches are compositionally biased toward polar residues: residues 354-363 (VPSVTSTPIL) and 379-394 (ATSS…QTSV). 2 disordered regions span residues 354–427 (VPSV…ADAV) and 448–646 (GTIQ…AGAS). Low complexity-rich tracts occupy residues 395–427 (AGAE…ADAV), 448–483 (GTIQ…SQEP), and 574–622 (APTS…EATA). Residues 623 to 637 (PTETDSGASTGTNPE) are compositionally biased toward polar residues. Gly-644 carries GPI-anchor amidated glycine lipidation. A propeptide spans 645-667 (ASKSVGISGLAGIVCGIAMAMLA) (removed in mature form).

Belongs to the glycosyl hydrolase 16 family.

The protein localises to the cell membrane. It catalyses the reaction Endohydrolysis of (1-&gt;3)- or (1-&gt;4)-linkages in beta-D-glucans when the glucose residue whose reducing group is involved in the linkage to be hydrolyzed is itself substituted at C-3.. Its function is as follows. Mixed-linked glucanase involved in the degradation of complex natural cellulosic substrates. The chain is Probable endo-1,3(4)-beta-glucanase AFLA_105200 from Aspergillus flavus (strain ATCC 200026 / FGSC A1120 / IAM 13836 / NRRL 3357 / JCM 12722 / SRRC 167).